Reading from the N-terminus, the 328-residue chain is Tetraacyldisaccharide 4'-kinase (328 aa).

Residue 55–62 coordinates ATP; that stretch reads TAGGNGKT.

This sequence belongs to the LpxK family.

The enzyme catalyses a lipid A disaccharide + ATP = a lipid IVA + ADP + H(+). It functions in the pathway glycolipid biosynthesis; lipid IV(A) biosynthesis; lipid IV(A) from (3R)-3-hydroxytetradecanoyl-[acyl-carrier-protein] and UDP-N-acetyl-alpha-D-glucosamine: step 6/6. Its function is as follows. Transfers the gamma-phosphate of ATP to the 4'-position of a tetraacyldisaccharide 1-phosphate intermediate (termed DS-1-P) to form tetraacyldisaccharide 1,4'-bis-phosphate (lipid IVA). This is Tetraacyldisaccharide 4'-kinase from Escherichia coli O81 (strain ED1a).